Consider the following 321-residue polypeptide: uncharacterized protein (321 aa).

The tract at residues 1-80 (MQGGQEVGRE…GELSGGWGEF (80 aa)) is disordered.

This is an uncharacterized protein from Mus musculus (Mouse).